The primary structure comprises 601 residues: Glutamine--tRNA ligase (601 aa).

Positions 76-86 (PEPNGYLHIGH) match the 'HIGH' region motif. Residues 77–79 (EPN) and 83–89 (HIGHAKS) contribute to the ATP site. L-glutamine contacts are provided by Asp109 and Tyr253. Residues Thr272, 301–302 (RL), and 309–311 (MSK) each bind ATP. The short motif at 308–312 (VMSKR) is the 'KMSKS' region element.

The protein belongs to the class-I aminoacyl-tRNA synthetase family. As to quaternary structure, monomer.

It is found in the cytoplasm. It carries out the reaction tRNA(Gln) + L-glutamine + ATP = L-glutaminyl-tRNA(Gln) + AMP + diphosphate. This chain is Glutamine--tRNA ligase, found in Rhodopirellula baltica (strain DSM 10527 / NCIMB 13988 / SH1).